Here is an 88-residue protein sequence, read N- to C-terminus: Envelope small membrane protein (88 aa).

Topologically, residues 1–16 (MFNLFLTDTVWYVGQI) are virion surface. The helical transmembrane segment at 17–37 (IFIVAVCLMVTIIVVAFLASI) threads the bilayer. Over 38 to 79 (KRCIQLCGLCNTLLLSPSIYLYNRSKQLYKYYNEEVRPPPLE) the chain is Intravirion.

Belongs to the betacoronaviruses E protein family. As to quaternary structure, homopentamer. Interacts with membrane protein M in the budding compartment of the host cell, which is located between endoplasmic reticulum and the Golgi complex. Interacts with Nucleoprotein.

Its subcellular location is the host Golgi apparatus membrane. Plays a central role in virus morphogenesis and assembly. Acts as a viroporin and self-assembles in host membranes forming pentameric protein-lipid pores that allow ion transport. Also plays a role in the induction of apoptosis. This is Envelope small membrane protein from Mus musculus (Mouse).